Reading from the N-terminus, the 370-residue chain is MKKKKDEELTPWAKYQKEHNANSRSRFKRKRKATSKNPREPQASFRRNNRNKVKKSNKKGTKRIVKEQRLSRQKLGILIGSTLIVIALFFGYFYSSISRVQKFSVSGNKRVSTAKILKNVSIKKNDVILTSIFKEGKFENNLLKKNTDIKDATVSISWSGKVKIKVKENAVMGYVIRNKTYYTVKQDGSVVRKSVSQPSSDYPIFRNFQENSTLKKFLKEYAQMPNSVQNDVAEVDFSPTKNVKDRLHFFMNDGNQVYAIMSTFAKKMKYYPEISASMKERGMVDLQVGAFSRPSGWTDEAKAASESSKSAESSSKAKKQEKTTQNSESADSTSASADSTETINSASSQSKEDLESSNAESTVNTQQDID.

Residues 1–65 form a disordered region; it reads MKKKKDEELT…SNKKGTKRIV (65 aa). The Cytoplasmic portion of the chain corresponds to 1–74; that stretch reads MKKKKDEELT…VKEQRLSRQK (74 aa). Composition is skewed to basic residues over residues 25–34 and 47–63; these read SRFKRKRKAT and RNNR…GTKR. The helical transmembrane segment at 75-95 threads the bilayer; sequence LGILIGSTLIVIALFFGYFYS. Residues 96 to 370 are Extracellular-facing; that stretch reads SISRVQKFSV…STVNTQQDID (275 aa). The 72-residue stretch at 98 to 169 folds into the POTRA domain; that stretch reads SRVQKFSVSG…GKVKIKVKEN (72 aa). The interval 295–370 is disordered; sequence SGWTDEAKAA…STVNTQQDID (76 aa). 2 stretches are compositionally biased toward low complexity: residues 304–314 and 327–342; these read ASESSKSAESS and SESA…STET. A compositionally biased stretch (polar residues) spans 356-370; the sequence is SSNAESTVNTQQDID.

Belongs to the FtsQ/DivIB family. DivIB subfamily.

The protein resides in the cell membrane. Its function is as follows. Cell division protein that may be involved in stabilizing or promoting the assembly of the division complex. This is Cell division protein DivIB from Pediococcus pentosaceus (strain ATCC 25745 / CCUG 21536 / LMG 10740 / 183-1w).